Here is a 565-residue protein sequence, read N- to C-terminus: Dihydroxy-acid dehydratase (565 aa).

Residue Cys-50 coordinates [2Fe-2S] cluster. Asp-82 provides a ligand contact to Mg(2+). Cys-123 serves as a coordination point for [2Fe-2S] cluster. Residues Asp-124 and Lys-125 each contribute to the Mg(2+) site. Position 125 is an N6-carboxylysine (Lys-125). A [2Fe-2S] cluster-binding site is contributed by Cys-195. Residue Glu-447 coordinates Mg(2+). Ser-473 functions as the Proton acceptor in the catalytic mechanism.

The protein belongs to the IlvD/Edd family. As to quaternary structure, homodimer. It depends on [2Fe-2S] cluster as a cofactor. The cofactor is Mg(2+).

The enzyme catalyses (2R)-2,3-dihydroxy-3-methylbutanoate = 3-methyl-2-oxobutanoate + H2O. It carries out the reaction (2R,3R)-2,3-dihydroxy-3-methylpentanoate = (S)-3-methyl-2-oxopentanoate + H2O. It participates in amino-acid biosynthesis; L-isoleucine biosynthesis; L-isoleucine from 2-oxobutanoate: step 3/4. It functions in the pathway amino-acid biosynthesis; L-valine biosynthesis; L-valine from pyruvate: step 3/4. Functionally, functions in the biosynthesis of branched-chain amino acids. Catalyzes the dehydration of (2R,3R)-2,3-dihydroxy-3-methylpentanoate (2,3-dihydroxy-3-methylvalerate) into 2-oxo-3-methylpentanoate (2-oxo-3-methylvalerate) and of (2R)-2,3-dihydroxy-3-methylbutanoate (2,3-dihydroxyisovalerate) into 2-oxo-3-methylbutanoate (2-oxoisovalerate), the penultimate precursor to L-isoleucine and L-valine, respectively. This chain is Dihydroxy-acid dehydratase, found in Halorhodospira halophila (strain DSM 244 / SL1) (Ectothiorhodospira halophila (strain DSM 244 / SL1)).